The primary structure comprises 470 residues: uncharacterized protein (470 aa).

Residues 418–453 (SECCEEQEEKEKKKEKEKEKKKEKDDDDDQQNNNNN) are a coiled coil. The segment at 423–470 (EQEEKEKKKEKEKEKKKEKDDDDDQQNNNNNDQNGLGLGLGLNFGLNL) is disordered. Residues 426-441 (EKEKKKEKEKEKKKEK) are compositionally biased toward basic and acidic residues. Positions 448–457 (QNNNNNDQNG) are enriched in low complexity.

This is an uncharacterized protein from Acidianus bottle-shaped virus (isolate Italy/Pozzuoli) (ABV).